Consider the following 482-residue polypeptide: MVMEKPSPLLVGREFVRQYYTLLNKAPEYLHRFYGRNSSYVHGGVDASGKPQEAVYGQNDIHHKVLSLNFSECHTKIRHVDAHATLSDGVVVQVMGLLSNSGQPERKFMQTFVLAPEGSVPNKFYVHNDMFRYEDEVFGDSEPELDEESEDEVEEEQEDRQPSPEPVQENANSAYYDAHPVTNGIEEPLEESSHEPEPEPESETKTEELKPQVEEKHLEELEEKSATPPPAEPASLPQEPPKAFSWASVTSKNLPPSGTVSSSGIPPHVKAPVSQPRVDAKPEVQSQPPRVREQRPRERPGFPPRGPRPGRGDMEQNDSDNRRIIRYPDSHQLFVGNLPHDIDENELKEFFMSFGNVVELRINTKGVGGKLPNFGFVVFDDSEPVQRILIAKPIMFRGEVRLNVEEKKTRAARERETRGGGDDRRDIRRNDRGPGGPRGIVGGGMMRDRDGRGPPPRGGMTQKLGSGRGTGQMEGRFTGQRR.

One can recognise an NTF2 domain in the interval 11–133; that stretch reads VGREFVRQYY…FYVHNDMFRY (123 aa). A compositionally biased stretch (acidic residues) spans 140–158; sequence DSEPELDEESEDEVEEEQE. 2 disordered regions span residues 140 to 170 and 187 to 318; these read DSEP…VQEN and EPLE…EQND. Phosphoserine is present on residues Ser141, Ser149, and Ser225. The acidic disordered region stretch occupies residues 142 to 220; it reads EPELDEESED…PQVEEKHLEE (79 aa). Residues 191 to 225 show a composition bias toward basic and acidic residues; sequence ESSHEPEPEPESETKTEELKPQVEEKHLEELEEKS. Thr227 is modified (phosphothreonine). Over residues 247–264 the composition is skewed to polar residues; sequence ASVTSKNLPPSGTVSSSG. Lys281 is covalently cross-linked (Glycyl lysine isopeptide (Lys-Gly) (interchain with G-Cter in SUMO2)). Positions 290-300 are enriched in basic and acidic residues; it reads RVREQRPRERP. The region spanning 331–409 is the RRM domain; it reads HQLFVGNLPH…VRLNVEEKKT (79 aa). Lys392 is modified (N6-succinyllysine). Residues 404–476 are RG-rich region; it reads VEEKKTRAAR…GRGTGQMEGR (73 aa). Residues 408 to 432 show a composition bias toward basic and acidic residues; the sequence is KTRAARERETRGGGDDRRDIRRNDR. The interval 408-482 is disordered; it reads KTRAARERET…MEGRFTGQRR (75 aa). A compositionally biased stretch (gly residues) spans 433–445; that stretch reads GPGGPRGIVGGGM. The residue at position 457 (Arg457) is an Omega-N-methylarginine. Residue Ser466 is modified to Phosphoserine. At Arg468 the chain carries Omega-N-methylarginine.

In terms of assembly, forms homooligomers. Forms heterodimers with G3BP1. Interacts with NFKBIA (via N-terminus). Interacts (via NTF2 domain) with USP10; inhibiting stress granule formation. Interacts (via NTF2 domain) with CAPRIN1; promoting stress granule formation. Associates (via RG-rich region) with 40S ribosome subunits. Interacts with PABPC1.

It is found in the cytoplasm. It localises to the stress granule. Its activity is regulated as follows. Under physiological conditions, G3BP2 adopts a compact state that is stabilized by intramolecular interactions between the RG-rich and the acidic regions that inhibit phase separation. Upon stress, polysomes disassemble and mRNAs are released in an unfolded protein-free state. Binding of unfolded mRNA to G3BP2 outcompetes the intramolecular interactions and RNA-bound G3BP2 adopts an expanded conformation in which the RG-rich region becomes exposed to engage in protein-protein and protein-RNA interactions, allowing physical cross-linking of RNA molecules to form protein-RNA condensates, leading to liquid-liquid phase separation (LLPS). In terms of biological role, scaffold protein that plays an essential role in cytoplasmic stress granule formation which acts as a platform for antiviral signaling. Plays an essential role in stress granule formation. Stress granules are membraneless compartments that store mRNAs and proteins, such as stalled translation pre-initiation complexes, in response to stress. Promotes formation of stress granules phase-separated membraneless compartment by undergoing liquid-liquid phase separation (LLPS) upon unfolded RNA-binding: functions as a molecular switch that triggers RNA-dependent LLPS in response to a rise in intracellular free RNA concentrations. The chain is Ras GTPase-activating protein-binding protein 2 (G3bp2) from Mus musculus (Mouse).